The sequence spans 132 residues: Small ribosomal subunit protein uS8 (132 aa).

It belongs to the universal ribosomal protein uS8 family. Part of the 30S ribosomal subunit. Contacts proteins S5 and S12.

Its function is as follows. One of the primary rRNA binding proteins, it binds directly to 16S rRNA central domain where it helps coordinate assembly of the platform of the 30S subunit. This Sinorhizobium medicae (strain WSM419) (Ensifer medicae) protein is Small ribosomal subunit protein uS8.